The chain runs to 397 residues: Acetate kinase (397 aa).

N7 lines the Mg(2+) pocket. K14 contacts ATP. Residue R91 coordinates substrate. The Proton donor/acceptor role is filled by D148. ATP-binding positions include 208 to 212 (HLGNG), 283 to 285 (DLR), and 331 to 335 (GVGEN). A Mg(2+)-binding site is contributed by E384.

It belongs to the acetokinase family. In terms of assembly, homodimer. Mg(2+) is required as a cofactor. The cofactor is Mn(2+).

The protein resides in the cytoplasm. The catalysed reaction is acetate + ATP = acetyl phosphate + ADP. Its pathway is metabolic intermediate biosynthesis; acetyl-CoA biosynthesis; acetyl-CoA from acetate: step 1/2. Its function is as follows. Catalyzes the formation of acetyl phosphate from acetate and ATP. Can also catalyze the reverse reaction. The polypeptide is Acetate kinase (Syntrophomonas wolfei subsp. wolfei (strain DSM 2245B / Goettingen)).